Here is a 482-residue protein sequence, read N- to C-terminus: Putative metabolite transport protein YfiG (482 aa).

Residues 1–29 (MSTKKKEAVIGKESLAHKGLLRTITLVST) are Cytoplasmic-facing. The chain crosses the membrane as a helical span at residues 30-50 (FGGLLFGYDTGVINGALPFMA). Residues 51–59 (TAGQLNLTP) are Extracellular-facing. A helical transmembrane segment spans residues 60 to 80 (VTEGLVASSLLLGAAFGAMFG). Residues 81 to 92 (GRLSDRHGRRKT) are Cytoplasmic-facing. The helical transmembrane segment at 93 to 113 (ILYLALLFIAATLGCTFSPNA) threads the bilayer. At 114 to 120 (SVMIAFR) the chain is on the extracellular side. The helical transmembrane segment at 121 to 141 (FLLGLAVGCASVTVPTFLAEI) threads the bilayer. The Cytoplasmic segment spans residues 142–155 (SPAERRGRIVTQNE). Residues 156–176 (LMIVIGQLLAYTFNAIIGSTM) form a helical membrane-spanning segment. At 177-184 (GESANVWR) the chain is on the extracellular side. The helical transmembrane segment at 185–205 (YMLVIATLPAVVLWFGMLIVP) threads the bilayer. At 206–263 (ESPRWLAAKGRMGDALRVLRQIREDSQAQQEIKEIKHAIEGTAKKAGFHDFQEPWIRR) the chain is on the cytoplasmic side. A helical transmembrane segment spans residues 264 to 284 (ILFIGIGIAIVQQITGVNSIM). Residues 285–301 (YYGTEILREAGFQTEAA) lie on the Extracellular side of the membrane. The chain crosses the membrane as a helical span at residues 302-322 (LIGNIANGVISVIAVIFGIWL). Residues 323 to 331 (LGKVRRRPM) lie on the Cytoplasmic side of the membrane. Helical transmembrane passes span 332–352 (LIIGQIGTMTALLLIGILSIV) and 353–373 (LEGTPALPYVVLSLTILFLAF). The Cytoplasmic portion of the chain corresponds to 374 to 400 (QQTAISTVTWLMLSEIFPMHVRGLGMG). A helical transmembrane segment spans residues 401–421 (ISTFCLWTANFLIGFTFPILL). Topologically, residues 422–423 (NH) are extracellular. The chain crosses the membrane as a helical span at residues 424-444 (IGMSATFFIFVAMNILAILFV). The Cytoplasmic segment spans residues 445–482 (KKYVPETKGRSLEQLEHSFRQYGRRADQEIQNQTTHLS).

It belongs to the major facilitator superfamily. Sugar transporter (TC 2.A.1.1) family.

It is found in the cell membrane. The sequence is that of Putative metabolite transport protein YfiG (yfiG) from Bacillus subtilis (strain 168).